A 624-amino-acid polypeptide reads, in one-letter code: LGDVPGTSGAVFVARPESKSPDRFGLFGAPPLEEGYVILVGDENLKQFPPPSKFLPSVWNRSRAARLVCCSIVLCCLCLAVFLYWSENMGQTVTTPLSLTLDHWKDVERTAHNQSVDVKKRRWVTFCSVEWPTFNVGWPQDGTFNRDIITQVKIKVFSPGPHGHPDQVPYIVTWEALAFDPPPWVKPFVHPKPPLPPSAPSLLPEPPLSTSPRSSLYPALTPSLGAKPKPQVLPDSGGPLIDLLTEDPPPYRDPGPPPSDRDRDDGEAAPAGEAPDPSPMASRLRGRRELPVADSTTSQAFPLRSGGNGQLQYWPFSSSDLYNWKNNNPSFSEDPGKLTALIESVLLTHQPTWDDCQQLLGTLLTGEEKQRVLLEARKAVRGEDGRPTQLPNEINDAFPLERPDWDYNTQRGRNHLVLYRQLLLAGLQNAGRSPTNLAKVKGITQGPNESPSAFLERLKEAYRRYTPYDPEDPGQETNVSMSFIWQSAPDIGRKLERLEDLKSKTLGDLVREAEKIFNKRETPEEREERIKRETEEKEERRRAEDEQKEKERDRRRHREMSKLLATVVSGQKQDRQGGERRRPQLDKDQCAYCKEKGHWAKDCPKKPRGPRGPRPQTSLLALDD.

Topologically, residues 1-63 (LGDVPGTSGA…FLPSVWNRSR (63 aa)) are cytoplasmic. The chain crosses the membrane as a helical span at residues 64–86 (AARLVCCSIVLCCLCLAVFLYWS). Topologically, residues 87–624 (ENMGQTVTTP…PQTSLLALDD (538 aa)) are extracellular. The N-linked (GlcNAc...) asparagine; by host glycan is linked to asparagine 113. 2 stretches are compositionally biased toward pro residues: residues 200-209 (PSLLPEPPLS) and 247-258 (DPPPYRDPGPPP). Disordered regions lie at residues 200 to 284 (PSLL…ASRL) and 290 to 309 (LPVA…GGNG). An N-linked (GlcNAc...) asparagine; by host glycan is attached at asparagine 478. 2 stretches are compositionally biased toward basic and acidic residues: residues 520–552 (RETP…EKER) and 572–605 (KQDR…DCPK). A disordered region spans residues 520–624 (RETPEEREER…PQTSLLALDD (105 aa)).

Post-translationally, glycosylated by host. In terms of processing, cleaved by host near the middle of the molecule, releasing the c-terminal half containing capsid and nucleoprotein domains op GAG.

It is found in the host cell membrane. In terms of biological role, plays a role in viral particle release. Presumably acts by facilitating the fission of the virion bud at the cell surface. May prevent the antiviral activity of murine APOBEC3. This is Glyco-Gag protein from Mus musculus (Mouse).